The chain runs to 719 residues: Protein lin-15A (719 aa).

4 disordered regions span residues 179–199, 419–464, 559–626, and 684–719; these read FSHFPSEPSPSKPRATREGSQ, YRDH…SISW, LTTA…PTKT, and AKQVAAAPSEPKHIPPTHMEKKPEELLMDPKPEPIF. Residues 570–579 show a composition bias toward low complexity; it reads STSTDSSSSS. The span at 604–617 shows a compositional bias: polar residues; sequence LLQNKPTHVESSSP. The segment covering 693–719 has biased composition (basic and acidic residues); the sequence is EPKHIPPTHMEKKPEELLMDPKPEPIF.

The protein resides in the nucleus. In terms of biological role, synthetic multivulva (synMuv) class A protein. SynMuv proteins are required to repress the induction of vulval development. Acts redundantly with SynMuv class B protein lin-15B, and lin-35 to negatively regulate vulval development, most likely through antagonization of the Ras-signaling pathway. May also negatively regulate vulval development in association with other SynMuv class B proteins such as dpl-1 and efl-1. Regulates let-23 basal activity. Required for the correct expression and/or stability of lin-56. In Caenorhabditis elegans, this protein is Protein lin-15A.